Here is a 622-residue protein sequence, read N- to C-terminus: Probable potassium transport system protein Kup (622 aa).

The next 12 membrane-spanning stretches (helical) occupy residues Leu-7 to Phe-27, Val-44 to Val-64, Gly-95 to Ile-115, Pro-133 to Leu-153, Phe-165 to Val-185, Ala-199 to Leu-219, Trp-243 to Val-263, Leu-290 to Phe-310, Ile-338 to Phe-358, Ile-370 to Val-390, Trp-395 to Ala-415, and Asp-422 to Ala-442.

This sequence belongs to the HAK/KUP transporter (TC 2.A.72) family.

The protein resides in the cell inner membrane. The enzyme catalyses K(+)(in) + H(+)(in) = K(+)(out) + H(+)(out). Functionally, transport of potassium into the cell. Likely operates as a K(+):H(+) symporter. This is Probable potassium transport system protein Kup from Erythrobacter litoralis (strain HTCC2594).